A 138-amino-acid chain; its full sequence is Acidic phospholipase A2 Cvv-E6a (138 aa).

Positions methionine 1–glycine 16 are cleaved as a signal peptide. 7 disulfide bridges follow: cysteine 42–cysteine 131, cysteine 44–cysteine 60, cysteine 59–cysteine 111, cysteine 65–cysteine 138, cysteine 66–cysteine 104, cysteine 73–cysteine 97, and cysteine 91–cysteine 102. Ca(2+) contacts are provided by tyrosine 43, glycine 45, and glycine 47. Histidine 63 is a catalytic residue. Residue aspartate 64 coordinates Ca(2+). The active site involves aspartate 105.

Belongs to the phospholipase A2 family. Group II subfamily. D49 sub-subfamily. The cofactor is Ca(2+). In terms of tissue distribution, expressed by the venom gland.

Its subcellular location is the secreted. It carries out the reaction a 1,2-diacyl-sn-glycero-3-phosphocholine + H2O = a 1-acyl-sn-glycero-3-phosphocholine + a fatty acid + H(+). In terms of biological role, snake venom phospholipase A2 (PLA2) that significantly inhibits ADP-induced platelet aggregation in platelet-rich plasma of human, rabbit and guinea pig. PLA2 catalyzes the calcium-dependent hydrolysis of the 2-acyl groups in 3-sn-phosphoglycerides. The protein is Acidic phospholipase A2 Cvv-E6a of Crotalus viridis viridis (Prairie rattlesnake).